Reading from the N-terminus, the 227-residue chain is Large ribosomal subunit protein uL1 (227 aa).

It belongs to the universal ribosomal protein uL1 family. In terms of assembly, part of the 50S ribosomal subunit.

Binds directly to 23S rRNA. The L1 stalk is quite mobile in the ribosome, and is involved in E site tRNA release. In terms of biological role, protein L1 is also a translational repressor protein, it controls the translation of the L11 operon by binding to its mRNA. This chain is Large ribosomal subunit protein uL1, found in Brevibacillus brevis (strain 47 / JCM 6285 / NBRC 100599).